The chain runs to 416 residues: Phosphatidylinositol 5-phosphate 4-kinase type-2 beta (416 aa).

N-acetylserine is present on Ser-2. A Phosphothreonine modification is found at Thr-8. Ser-19 carries the post-translational modification Phosphoserine. Residues 38-415 (ASEPILSVLM…RFNEFMSNIL (378 aa)) form the PIPK domain. The tract at residues 64–70 (VMLMPDD) is required for interaction with PIP5K1A. N6-acetyllysine is present on residues Lys-94 and Lys-150. ATP is bound by residues 202–204 (RNV) and Lys-214. GTP-binding positions include 203–204 (NV) and Lys-214. Thr-322 carries the post-translational modification Phosphothreonine. A Phosphoserine modification is found at Ser-326. Residue Asp-369 participates in GTP binding.

In terms of assembly, homodimer. Binds TNFRSF1A. Interacts with PIP4K2A; the interaction suppresses ubiquitination by the SPOP/CUL3 complex. Post-translationally, ubiquitinated by the SPOP/CUL3 complex. Ubiquitination is stimulated by PtdIns5P levels. In terms of processing, phosphorylated on serine residues. In terms of tissue distribution, highly expressed in brain, heart, pancreas, skeletal muscle and kidney. Detected at lower levels in placenta, lung and liver.

It is found in the endoplasmic reticulum membrane. The protein resides in the cell membrane. Its subcellular location is the nucleus. The protein localises to the cytoplasm. It catalyses the reaction a 1,2-diacyl-sn-glycero-3-phospho-(1D-myo-inositol-5-phosphate) + ATP = a 1,2-diacyl-sn-glycero-3-phospho-(1D-myo-inositol-4,5-bisphosphate) + ADP + H(+). The enzyme catalyses 1,2-dihexadecanoyl-sn-glycero-3-phospho-(1D-myo-inositol-5-phosphate) + ATP = 1,2-dihexadecanoyl-sn-glycero-3-phospho-(1D-myo-inositol-4,5-bisphosphate) + ADP + H(+). It carries out the reaction 1,2-dihexadecanoyl-sn-glycero-3-phospho-(1D-myo-inositol-5-phosphate) + GTP = 1,2-dihexadecanoyl-sn-glycero-3-phospho-(1D-myo-inositol-4,5-bisphosphate) + GDP + H(+). In terms of biological role, participates in the biosynthesis of phosphatidylinositol 4,5-bisphosphate. Preferentially utilizes GTP, rather than ATP, for PI(5)P phosphorylation and its activity reflects changes in direct proportion to the physiological GTP concentration. Its GTP-sensing activity is critical for metabolic adaptation. PIP4Ks negatively regulate insulin signaling through a catalytic-independent mechanism. They interact with PIP5Ks and suppress PIP5K-mediated PtdIns(4,5)P2 synthesis and insulin-dependent conversion to PtdIns(3,4,5)P3. The sequence is that of Phosphatidylinositol 5-phosphate 4-kinase type-2 beta from Homo sapiens (Human).